Consider the following 969-residue polypeptide: Translation initiation factor IF-2 (969 aa).

Residues 49-63 (HLRKSHGATDGDKRK) show a composition bias toward basic and acidic residues. Disordered regions lie at residues 49–85 (HLRK…KART), 100–128 (DDVS…REEE), and 143–380 (LRER…SFQA). Positions 105 to 114 (VAEQGQAQVA) are enriched in low complexity. Positions 143 to 181 (LRERQERLEREEAERRAREEAAEAERRRAEEEAAAKRAA) are enriched in basic and acidic residues. Over residues 182-206 (AEAAAAQQAAQQAAAAQQAAAPADS) the composition is skewed to low complexity. A compositionally biased stretch (basic and acidic residues) spans 209–260 (DEARAAAERAAQREAAKKAEDAAREAAEKARAEQEEIRKRREAAEAEARAIR). A compositionally biased stretch (low complexity) spans 301-323 (AQARPAAKKPAAAPAATPAPAGA). A compositionally biased stretch (gly residues) spans 353-366 (SSGGVDRGWRGGPK). Residues 469–638 (PRPPVVTVMG…LLQAEVLELK (170 aa)) form the tr-type G domain. The tract at residues 478 to 485 (GHVDHGKT) is G1. 478-485 (GHVDHGKT) serves as a coordination point for GTP. Positions 503–507 (GITQH) are G2. A G3 region spans residues 524–527 (DTPG). Residues 524–528 (DTPGH) and 578–581 (NKID) contribute to the GTP site. The tract at residues 578–581 (NKID) is G4. Residues 614–616 (SAK) are G5.

The protein belongs to the TRAFAC class translation factor GTPase superfamily. Classic translation factor GTPase family. IF-2 subfamily.

Its subcellular location is the cytoplasm. Functionally, one of the essential components for the initiation of protein synthesis. Protects formylmethionyl-tRNA from spontaneous hydrolysis and promotes its binding to the 30S ribosomal subunits. Also involved in the hydrolysis of GTP during the formation of the 70S ribosomal complex. This is Translation initiation factor IF-2 from Burkholderia multivorans (strain ATCC 17616 / 249).